The sequence spans 127 residues: Glycine cleavage system H protein (127 aa).

Residues 23 to 104 (TALVGLTDYA…PYEAWFAKIT (82 aa)) form the Lipoyl-binding domain. Lysine 64 is modified (N6-lipoyllysine).

It belongs to the GcvH family. As to quaternary structure, the glycine cleavage system is composed of four proteins: P, T, L and H. (R)-lipoate is required as a cofactor.

In terms of biological role, the glycine cleavage system catalyzes the degradation of glycine. The H protein shuttles the methylamine group of glycine from the P protein to the T protein. This Lachnoclostridium phytofermentans (strain ATCC 700394 / DSM 18823 / ISDg) (Clostridium phytofermentans) protein is Glycine cleavage system H protein.